A 120-amino-acid polypeptide reads, in one-letter code: Large ribosomal subunit protein bL12 (120 aa).

The protein belongs to the bacterial ribosomal protein bL12 family. Homodimer. Part of the ribosomal stalk of the 50S ribosomal subunit. Forms a multimeric L10(L12)X complex, where L10 forms an elongated spine to which 2 to 4 L12 dimers bind in a sequential fashion. Binds GTP-bound translation factors.

Functionally, forms part of the ribosomal stalk which helps the ribosome interact with GTP-bound translation factors. Is thus essential for accurate translation. In Lachnoclostridium phytofermentans (strain ATCC 700394 / DSM 18823 / ISDg) (Clostridium phytofermentans), this protein is Large ribosomal subunit protein bL12.